Consider the following 261-residue polypeptide: Cytochrome c oxidase subunit 3 (261 aa).

At 1-15 (MTHQTHAYHMVNPSP) the chain is on the mitochondrial matrix side. Residues 16-34 (WPLTGALSALLMTSGLIMW) traverse the membrane as a helical segment. At 35-40 (FHFNST) the chain is on the mitochondrial intermembrane side. Residues 41–66 (ILLMLGLTTNMLTMYQWWRDVIREST) traverse the membrane as a helical segment. Over 67–72 (FQGHHT) the chain is Mitochondrial matrix. The helical transmembrane segment at 73–105 (PNVQKGLRYGMILFIISEVLFFTGFFWAFYHSS) threads the bilayer. The Mitochondrial intermembrane portion of the chain corresponds to 106 to 128 (LAPTPELGGCWPPTGIHPLNPLE). A helical membrane pass occupies residues 129-152 (VPLLNTSVLLASGVSITWAHHSLM). Residues 153 to 155 (EGN) lie on the Mitochondrial matrix side of the membrane. Residues 156–183 (RNHMLQALFITIALGVYFTLLQASEYYE) form a helical membrane-spanning segment. The Mitochondrial intermembrane portion of the chain corresponds to 184–190 (APFTISD). The chain crosses the membrane as a helical span at residues 191 to 223 (GVYGSTFFVATGFHGLHVIIGSTFLIVCFFRQL). The Mitochondrial matrix portion of the chain corresponds to 224-232 (KFHFTSNHH). Residues 233–256 (FGFEAAAWYWHFVDVVWLFLYVSI) form a helical membrane-spanning segment. Residues 257-261 (YWWGS) lie on the Mitochondrial intermembrane side of the membrane.

This sequence belongs to the cytochrome c oxidase subunit 3 family. Component of the cytochrome c oxidase (complex IV, CIV), a multisubunit enzyme composed of 14 subunits. The complex is composed of a catalytic core of 3 subunits MT-CO1, MT-CO2 and MT-CO3, encoded in the mitochondrial DNA, and 11 supernumerary subunits COX4I, COX5A, COX5B, COX6A, COX6B, COX6C, COX7A, COX7B, COX7C, COX8 and NDUFA4, which are encoded in the nuclear genome. The complex exists as a monomer or a dimer and forms supercomplexes (SCs) in the inner mitochondrial membrane with NADH-ubiquinone oxidoreductase (complex I, CI) and ubiquinol-cytochrome c oxidoreductase (cytochrome b-c1 complex, complex III, CIII), resulting in different assemblies (supercomplex SCI(1)III(2)IV(1) and megacomplex MCI(2)III(2)IV(2)).

The protein resides in the mitochondrion inner membrane. It catalyses the reaction 4 Fe(II)-[cytochrome c] + O2 + 8 H(+)(in) = 4 Fe(III)-[cytochrome c] + 2 H2O + 4 H(+)(out). Component of the cytochrome c oxidase, the last enzyme in the mitochondrial electron transport chain which drives oxidative phosphorylation. The respiratory chain contains 3 multisubunit complexes succinate dehydrogenase (complex II, CII), ubiquinol-cytochrome c oxidoreductase (cytochrome b-c1 complex, complex III, CIII) and cytochrome c oxidase (complex IV, CIV), that cooperate to transfer electrons derived from NADH and succinate to molecular oxygen, creating an electrochemical gradient over the inner membrane that drives transmembrane transport and the ATP synthase. Cytochrome c oxidase is the component of the respiratory chain that catalyzes the reduction of oxygen to water. Electrons originating from reduced cytochrome c in the intermembrane space (IMS) are transferred via the dinuclear copper A center (CU(A)) of subunit 2 and heme A of subunit 1 to the active site in subunit 1, a binuclear center (BNC) formed by heme A3 and copper B (CU(B)). The BNC reduces molecular oxygen to 2 water molecules using 4 electrons from cytochrome c in the IMS and 4 protons from the mitochondrial matrix. The chain is Cytochrome c oxidase subunit 3 (MT-CO3) from Eudorcas thomsonii (Thomson's gazelle).